A 195-amino-acid chain; its full sequence is Phosphoheptose isomerase (195 aa).

The SIS domain occupies 35-195; that stretch reads LCVALYRGDK…EKEIFGDGVN (161 aa). 51–53 provides a ligand contact to substrate; the sequence is NGG. The Zn(2+) site is built by histidine 60 and glutamate 64. Residues glutamate 64, 93 to 94, 119 to 121, serine 124, and glutamine 171 each bind substrate; these read ND and STS. Residues glutamine 171 and histidine 179 each contribute to the Zn(2+) site.

It belongs to the SIS family. GmhA subfamily. Homotetramer. It depends on Zn(2+) as a cofactor.

Its subcellular location is the cytoplasm. The enzyme catalyses 2 D-sedoheptulose 7-phosphate = D-glycero-alpha-D-manno-heptose 7-phosphate + D-glycero-beta-D-manno-heptose 7-phosphate. The protein operates within carbohydrate biosynthesis; D-glycero-D-manno-heptose 7-phosphate biosynthesis; D-glycero-alpha-D-manno-heptose 7-phosphate and D-glycero-beta-D-manno-heptose 7-phosphate from sedoheptulose 7-phosphate: step 1/1. Functionally, catalyzes the isomerization of sedoheptulose 7-phosphate in D-glycero-D-manno-heptose 7-phosphate. This chain is Phosphoheptose isomerase, found in Sulfurimonas denitrificans (strain ATCC 33889 / DSM 1251) (Thiomicrospira denitrificans (strain ATCC 33889 / DSM 1251)).